A 391-amino-acid chain; its full sequence is NADH-quinone oxidoreductase subunit D (391 aa).

This sequence belongs to the complex I 49 kDa subunit family. In terms of assembly, NDH-1 is composed of 14 different subunits. Subunits NuoB, C, D, E, F, and G constitute the peripheral sector of the complex.

The protein localises to the cell inner membrane. It catalyses the reaction a quinone + NADH + 5 H(+)(in) = a quinol + NAD(+) + 4 H(+)(out). Its function is as follows. NDH-1 shuttles electrons from NADH, via FMN and iron-sulfur (Fe-S) centers, to quinones in the respiratory chain. The immediate electron acceptor for the enzyme in this species is believed to be ubiquinone. Couples the redox reaction to proton translocation (for every two electrons transferred, four hydrogen ions are translocated across the cytoplasmic membrane), and thus conserves the redox energy in a proton gradient. The polypeptide is NADH-quinone oxidoreductase subunit D (Rickettsia rickettsii (strain Iowa)).